A 1710-amino-acid polypeptide reads, in one-letter code: Centrosomal protein of 152 kDa (1710 aa).

Disordered stretches follow at residues 1-27 (MSLD…YERE), 39-79 (HDML…NEQM), and 108-139 (NRSK…SKCE). Positions 1–60 (MSLDFGSVALPVQNEDEEYDEEDYEREKELQQLLTDLPHDMLDDDLSSPELQYSDCSEDG) are interaction with PLK4. The segment covering 14 to 24 (NEDEEYDEEDY) has biased composition (acidic residues). The span at 108–123 (NRSKTEDRHPVYHPEE) shows a compositional bias: basic and acidic residues. Positions 234–490 (ENMQIIQLQV…ISLYESAAKL (257 aa)) form a coiled coil. Residues 587–604 (DEKSIEVETKTDTSEKPK) show a composition bias toward basic and acidic residues. Residues 587-611 (DEKSIEVETKTDTSEKPKNQLWPES) form a disordered region. Coiled coils occupy residues 615–664 (DVVR…QDFD), 700–772 (EKQQ…LEKE), and 902–993 (AVSE…INEV). Positions 1120–1142 (ELSKDSASQGTGQGDPGPAAGHH) are disordered. Residues 1170-1241 (HCFQELEKAK…LEELQTLCKT (72 aa)) are a coiled coil. Thr1241 is modified (phosphothreonine).

This sequence belongs to the CEP152 family. As to quaternary structure, interacts (via N-terminus) with PLK4; the interaction is mutally exclusive with a PLK4:CEP192 interaction. Interacts (via C-terminus) with CPAP (via-N-terminus). Interacts with CINP. Interacts with CDK5RAP2, WDR62, CEP63 and CEP131. CEP63, CDK5RAP2, CEP152, WDR62 are proposed to form a stepwise assembled complex at the centrosome forming a ring near parental centrioles. Interacts with DEUP1; this interaction recruits CEP152 to the deuterosome. The interactions with CEP63 and DEUP1 are mutually exclusive. Interacts with CCDC66.

The protein resides in the cytoplasm. It is found in the cytoskeleton. Its subcellular location is the microtubule organizing center. The protein localises to the centrosome. It localises to the centriole. Functionally, necessary for centrosome duplication; the function also seems to involve CEP63, CDK5RAP2 and WDR62 through a stepwise assembled complex at the centrosome that recruits CDK2 required for centriole duplication. Acts as a molecular scaffold facilitating the interaction of PLK4 and CPAP, 2 molecules involved in centriole formation. Proposed to snatch PLK4 away from PLK4:CEP92 complexes in early G1 daughter centriole and to reposition PLK4 at the outer boundary of a newly forming CEP152 ring structure. Also plays a key role in deuterosome-mediated centriole amplification in multiciliated that can generate more than 100 centrioles. Overexpression of CEP152 can drive amplification of centrioles. The chain is Centrosomal protein of 152 kDa from Homo sapiens (Human).